Reading from the N-terminus, the 365-residue chain is Histidinol-phosphate aminotransferase (365 aa).

The residue at position 220 (lysine 220) is an N6-(pyridoxal phosphate)lysine.

Belongs to the class-II pyridoxal-phosphate-dependent aminotransferase family. Histidinol-phosphate aminotransferase subfamily. As to quaternary structure, homodimer. Pyridoxal 5'-phosphate serves as cofactor.

It carries out the reaction L-histidinol phosphate + 2-oxoglutarate = 3-(imidazol-4-yl)-2-oxopropyl phosphate + L-glutamate. It participates in amino-acid biosynthesis; L-histidine biosynthesis; L-histidine from 5-phospho-alpha-D-ribose 1-diphosphate: step 7/9. The chain is Histidinol-phosphate aminotransferase from Neisseria meningitidis serogroup A / serotype 4A (strain DSM 15465 / Z2491).